Here is a 252-residue protein sequence, read N- to C-terminus: Undecaprenyl-diphosphatase (252 aa).

A run of 7 helical transmembrane segments spans residues 1 to 21 (MTTL…FLPI), 42 to 62 (HKAF…FLYF), 74 to 94 (ILIA…IIKS), 95 to 115 (LFNP…LILI), 172 to 192 (AAEF…FYDV), 206 to 226 (NLIV…KWLL), and 232 to 252 (HSFI…YLWY).

This sequence belongs to the UppP family.

The protein resides in the cell inner membrane. The enzyme catalyses di-trans,octa-cis-undecaprenyl diphosphate + H2O = di-trans,octa-cis-undecaprenyl phosphate + phosphate + H(+). Its function is as follows. Catalyzes the dephosphorylation of undecaprenyl diphosphate (UPP). Confers resistance to bacitracin. The sequence is that of Undecaprenyl-diphosphatase from Sulfurihydrogenibium sp. (strain YO3AOP1).